The following is a 43-amino-acid chain: DRDSCVDKSRCGKYGYYGQCDDCCKKAGDRAGTCVYYKCKCNP.

4 cysteine pairs are disulfide-bonded: cysteine 5-cysteine 23, cysteine 11-cysteine 34, cysteine 20-cysteine 39, and cysteine 24-cysteine 41.

Belongs to the ergtoxin family. Gamma-KTx 4 subfamily. Expressed by the venom gland.

It localises to the secreted. Functionally, reversibly blocks Kv11/ERG potassium channels. The chain is Potassium channel toxin gamma-KTx 4.9 from Centruroides sculpturatus (Arizona bark scorpion).